A 431-amino-acid chain; its full sequence is Glutamate-1-semialdehyde 2,1-aminomutase (431 aa).

K265 bears the N6-(pyridoxal phosphate)lysine mark.

The protein belongs to the class-III pyridoxal-phosphate-dependent aminotransferase family. HemL subfamily. Homodimer. Pyridoxal 5'-phosphate serves as cofactor.

Its subcellular location is the cytoplasm. The enzyme catalyses (S)-4-amino-5-oxopentanoate = 5-aminolevulinate. It functions in the pathway porphyrin-containing compound metabolism; protoporphyrin-IX biosynthesis; 5-aminolevulinate from L-glutamyl-tRNA(Glu): step 2/2. The sequence is that of Glutamate-1-semialdehyde 2,1-aminomutase from Aliivibrio fischeri (strain ATCC 700601 / ES114) (Vibrio fischeri).